The primary structure comprises 778 residues: Subtilisin-like protease SBT3.6 (778 aa).

Residues Met1–Arg22 form the signal peptide. A propeptide spans Ser23 to Ala113 (activation peptide). The Inhibitor I9 domain occupies Val34 to Ala113. Residue Asn69 is glycosylated (N-linked (GlcNAc...) asparagine). The 509-residue stretch at Thr117 to Ala625 folds into the Peptidase S8 domain. Asp147 (charge relay system) is an active-site residue. Asn158, Asn180, Asn202, and Asn206 each carry an N-linked (GlcNAc...) asparagine glycan. His222 (charge relay system) is an active-site residue. Residues Asn237, Asn399, Asn414, and Asn541 are each glycosylated (N-linked (GlcNAc...) asparagine). The region spanning Ser388–Thr483 is the PA domain. Residue Ser556 is the Charge relay system of the active site. Asn648, Asn724, and Asn759 each carry an N-linked (GlcNAc...) asparagine glycan.

It belongs to the peptidase S8 family.

It localises to the secreted. The chain is Subtilisin-like protease SBT3.6 from Arabidopsis thaliana (Mouse-ear cress).